A 554-amino-acid polypeptide reads, in one-letter code: uncharacterized protein (554 aa).

Disordered stretches follow at residues 1 to 127 (MTTH…NYND), 139 to 173 (IEDD…SKAG), 293 to 395 (NNNN…PLSE), and 416 to 509 (FGFS…RKIR). 3 stretches are compositionally biased toward low complexity: residues 9–30 (SSSN…NNNI), 46–55 (DPTSSSSPTN), and 63–125 (SNSN…LINY). Residues 139 to 153 (IEDDEEYEEIGDEES) are compositionally biased toward acidic residues. A compositionally biased stretch (polar residues) spans 164-173 (NDSLNGSKAG). Low complexity-rich tracts occupy residues 293–387 (NNNN…CSSN), 416–449 (FGFS…SSIS), and 461–484 (SPPL…NNNH). Basic residues predominate over residues 485–508 (HNNHHQNHHHQNHNHQHHSKKRKI).

This is an uncharacterized protein from Dictyostelium discoideum (Social amoeba).